Consider the following 92-residue polypeptide: UPF0728 protein C10orf53 homolog (92 aa).

It belongs to the UPF0728 family.

The polypeptide is UPF0728 protein C10orf53 homolog (Danio rerio (Zebrafish)).